We begin with the raw amino-acid sequence, 59 residues long: UPF0434 protein PMI0721 (59 aa).

It belongs to the UPF0434 family.

In Proteus mirabilis (strain HI4320), this protein is UPF0434 protein PMI0721.